The sequence spans 67 residues: Conotoxin Lt5.9 (67 aa).

The N-terminal stretch at 1-19 is a signal peptide; it reads MLCLPVFIILLLLASPAAP. Positions 20–46 are excised as a propeptide; sequence KSFETKVQSDLTRTDGNMETEENLGEV.

The protein belongs to the conotoxin T superfamily. In terms of processing, contains 2 disulfide bonds that can be either 'C1-C3, C2-C4' or 'C1-C4, C2-C3', since these disulfide connectivities have been observed for conotoxins with cysteine framework V (for examples, see AC P0DQQ7 and AC P81755). In terms of tissue distribution, expressed by the venom duct.

The protein resides in the secreted. The sequence is that of Conotoxin Lt5.9 from Conus litteratus (Lettered cone).